We begin with the raw amino-acid sequence, 336 residues long: tRNA-cytidine(32) 2-sulfurtransferase (336 aa).

Low complexity predominate over residues Thr11–Pro23. A disordered region spans residues Thr11–Pro31. The short motif at Ser75–Ser80 is the PP-loop motif element. Residues Cys150, Cys153, and Cys241 each contribute to the [4Fe-4S] cluster site.

The protein belongs to the TtcA family. Homodimer. The cofactor is Mg(2+). [4Fe-4S] cluster serves as cofactor.

The protein resides in the cytoplasm. The enzyme catalyses cytidine(32) in tRNA + S-sulfanyl-L-cysteinyl-[cysteine desulfurase] + AH2 + ATP = 2-thiocytidine(32) in tRNA + L-cysteinyl-[cysteine desulfurase] + A + AMP + diphosphate + H(+). Its pathway is tRNA modification. In terms of biological role, catalyzes the ATP-dependent 2-thiolation of cytidine in position 32 of tRNA, to form 2-thiocytidine (s(2)C32). The sulfur atoms are provided by the cysteine/cysteine desulfurase (IscS) system. This is tRNA-cytidine(32) 2-sulfurtransferase from Paraburkholderia xenovorans (strain LB400).